Reading from the N-terminus, the 377-residue chain is 2-aminoethylphosphonate--pyruvate transaminase (377 aa).

The residue at position 194 (Lys-194) is an N6-(pyridoxal phosphate)lysine.

The protein belongs to the class-V pyridoxal-phosphate-dependent aminotransferase family. PhnW subfamily. Homodimer. Requires pyridoxal 5'-phosphate as cofactor.

The enzyme catalyses (2-aminoethyl)phosphonate + pyruvate = phosphonoacetaldehyde + L-alanine. Involved in phosphonate degradation. The protein is 2-aminoethylphosphonate--pyruvate transaminase of Cupriavidus taiwanensis (strain DSM 17343 / BCRC 17206 / CCUG 44338 / CIP 107171 / LMG 19424 / R1) (Ralstonia taiwanensis (strain LMG 19424)).